The following is a 503-amino-acid chain: Probable DNA ligase (503 aa).

Glutamate 210 lines the ATP pocket. The N6-AMP-lysine intermediate role is filled by lysine 212. Residues arginine 217, arginine 232, glutamate 261, phenylalanine 296, arginine 367, and lysine 373 each coordinate ATP.

It belongs to the ATP-dependent DNA ligase family. Mg(2+) is required as a cofactor.

The catalysed reaction is ATP + (deoxyribonucleotide)n-3'-hydroxyl + 5'-phospho-(deoxyribonucleotide)m = (deoxyribonucleotide)n+m + AMP + diphosphate.. Its function is as follows. DNA ligase that seals nicks in double-stranded DNA during DNA replication, DNA recombination and DNA repair. The chain is Probable DNA ligase from Rhodococcus opacus (strain B4).